Here is a 290-residue protein sequence, read N- to C-terminus: Glycine--tRNA ligase alpha subunit (290 aa).

This sequence belongs to the class-II aminoacyl-tRNA synthetase family. As to quaternary structure, tetramer of two alpha and two beta subunits.

It localises to the cytoplasm. The catalysed reaction is tRNA(Gly) + glycine + ATP = glycyl-tRNA(Gly) + AMP + diphosphate. The sequence is that of Glycine--tRNA ligase alpha subunit from Prochlorococcus marinus (strain NATL1A).